Consider the following 286-residue polypeptide: uncharacterized protein (286 aa).

Disordered stretches follow at residues 1–38 (MSQK…EDDV), 108–146 (HTGE…RRHK), 196–227 (RTQK…KTRL), and 241–286 (DVDD…PRSS). A compositionally biased stretch (low complexity) spans 18–29 (SSSKQVLSSTSS). Basic and acidic residues predominate over residues 243 to 268 (DDQKKDGSGEEKKEKKSAEKEKKISH). Residues 269-278 (ENVQSLSPSS) are compositionally biased toward polar residues.

This is an uncharacterized protein from Caenorhabditis elegans.